The following is a 493-amino-acid chain: Cytochrome P450 2E1 (493 aa).

298–303 (FAGTET) lines the substrate pocket. Residue cysteine 437 participates in heme binding.

It belongs to the cytochrome P450 family. As to quaternary structure, interacts with chaperones HSP70 and HSP90; this interaction is required for initial targeting to mitochondria. Requires heme as cofactor. Highest level in the liver and to a lesser extent in the kidney, with a higher level in the male kidney than in the female.

It localises to the endoplasmic reticulum membrane. The protein localises to the microsome membrane. It is found in the mitochondrion inner membrane. The enzyme catalyses an organic molecule + reduced [NADPH--hemoprotein reductase] + O2 = an alcohol + oxidized [NADPH--hemoprotein reductase] + H2O + H(+). It carries out the reaction (5Z,8Z,11Z)-eicosatrienoate + reduced [NADPH--hemoprotein reductase] + O2 = 19-hydroxy-(5Z,8Z,11Z)-eicosatrienoate + oxidized [NADPH--hemoprotein reductase] + H2O + H(+). It catalyses the reaction (5Z,8Z,11Z,14Z,17Z)-eicosapentaenoate + reduced [NADPH--hemoprotein reductase] + O2 = 19-hydroxy-(5Z,8Z,11Z,14Z,17Z)-eicosapentaenoate + oxidized [NADPH--hemoprotein reductase] + H2O + H(+). The catalysed reaction is (4Z,7Z,10Z,13Z,16Z,19Z)-docosahexaenoate + reduced [NADPH--hemoprotein reductase] + O2 = 21-hydroxy-(4Z,7Z,10Z,13Z,16Z,19Z)-docosahexaenoate + oxidized [NADPH--hemoprotein reductase] + H2O + H(+). The enzyme catalyses dodecanoate + reduced [NADPH--hemoprotein reductase] + O2 = 11-hydroxydodecanoate + oxidized [NADPH--hemoprotein reductase] + H2O + H(+). It carries out the reaction tetradecanoate + reduced [NADPH--hemoprotein reductase] + O2 = 13-hydroxytetradecanoate + oxidized [NADPH--hemoprotein reductase] + H2O + H(+). It catalyses the reaction 4-nitrophenol + NADPH + O2 + H(+) = 4-nitrocatechol + NADP(+) + H2O. The protein operates within lipid metabolism; fatty acid metabolism. With respect to regulation, the omega-1 hydroxylase activity is stimulated by cytochrome b5. In terms of biological role, a cytochrome P450 monooxygenase involved in the metabolism of fatty acids. Mechanistically, uses molecular oxygen inserting one oxygen atom into a substrate, and reducing the second into a water molecule, with two electrons provided by NADPH via cytochrome P450 reductase (NADPH--hemoprotein reductase). Catalyzes the hydroxylation of carbon-hydrogen bonds. Hydroxylates fatty acids specifically at the omega-1 position displaying the highest catalytic activity for saturated fatty acids. May be involved in the oxidative metabolism of xenobiotics. The polypeptide is Cytochrome P450 2E1 (Cyp2e1) (Mus musculus (Mouse)).